Consider the following 275-residue polypeptide: Rhamnulose-1-phosphate aldolase (275 aa).

Glu-117 is an active-site residue. Zn(2+)-binding residues include His-141, His-143, and His-212.

Belongs to the aldolase class II family. RhaD subfamily. As to quaternary structure, homotetramer. Zn(2+) is required as a cofactor.

It localises to the cytoplasm. The enzyme catalyses L-rhamnulose 1-phosphate = (S)-lactaldehyde + dihydroxyacetone phosphate. Its pathway is carbohydrate degradation; L-rhamnose degradation; glycerone phosphate from L-rhamnose: step 3/3. Catalyzes the reversible cleavage of L-rhamnulose-1-phosphate to dihydroxyacetone phosphate (DHAP) and L-lactaldehyde. This Salmonella paratyphi C (strain RKS4594) protein is Rhamnulose-1-phosphate aldolase.